A 346-amino-acid polypeptide reads, in one-letter code: uncharacterized protein (346 aa).

A helical membrane pass occupies residues 7–27 (AMVILLIICGTYVLFIQYGSV). A disordered region spans residues 29 to 48 (EKKSNDSEPQVSNEEAQSGK). Over residues 35-44 (SEPQVSNEEA) the composition is skewed to polar residues. An SCP domain is found at 231-342 (LDLTNVIRVK…VDRKYYTQNF (112 aa)).

The protein resides in the cell membrane. This is an uncharacterized protein from Bacillus subtilis (strain 168).